Here is a 347-residue protein sequence, read N- to C-terminus: Ribosomal RNA large subunit methyltransferase M (347 aa).

S-adenosyl-L-methionine-binding positions include Ser-184, Ala-217 to Gly-220, Asp-236, Asp-256, and Asp-272. The active-site Proton acceptor is Lys-301.

It belongs to the class I-like SAM-binding methyltransferase superfamily. RNA methyltransferase RlmE family. RlmM subfamily. Monomer.

Its subcellular location is the cytoplasm. It carries out the reaction cytidine(2498) in 23S rRNA + S-adenosyl-L-methionine = 2'-O-methylcytidine(2498) in 23S rRNA + S-adenosyl-L-homocysteine + H(+). Its function is as follows. Catalyzes the 2'-O-methylation at nucleotide C2498 in 23S rRNA. This is Ribosomal RNA large subunit methyltransferase M from Xanthomonas euvesicatoria pv. vesicatoria (strain 85-10) (Xanthomonas campestris pv. vesicatoria).